The primary structure comprises 436 residues: UPF0597 protein YhaM (436 aa).

The protein belongs to the UPF0597 family.

In Escherichia coli (strain 55989 / EAEC), this protein is UPF0597 protein YhaM.